The primary structure comprises 309 residues: Homoserine O-succinyltransferase (309 aa).

C142 serves as the catalytic Acyl-thioester intermediate. K163 and S192 together coordinate substrate. Residue H235 is the Proton acceptor of the active site. The active site involves E237. Substrate is bound at residue R249.

Belongs to the MetA family. Homodimer.

The protein localises to the cytoplasm. It catalyses the reaction L-homoserine + succinyl-CoA = O-succinyl-L-homoserine + CoA. The protein operates within amino-acid biosynthesis; L-methionine biosynthesis via de novo pathway; O-succinyl-L-homoserine from L-homoserine: step 1/1. In terms of biological role, transfers a succinyl group from succinyl-CoA to L-homoserine, forming succinyl-L-homoserine. The chain is Homoserine O-succinyltransferase from Escherichia coli O127:H6 (strain E2348/69 / EPEC).